The following is a 47-amino-acid chain: APTPATLNGLTIFAPNDEAFKATGVPDLSKLSNAPMVSLLQYHAAAR.

The 47-residue stretch at Ala-1 to Arg-47 folds into the FAS1 domain.

The protein belongs to the fasciclin-like AGP family.

Its function is as follows. May be a cell surface adhesion protein. The sequence is that of Fasciclin-like arabinogalactan protein from Jatropha curcas (Barbados nut).